The primary structure comprises 154 residues: 3-hydroxyacyl-[acyl-carrier-protein] dehydratase FabZ (154 aa).

Histidine 57 is an active-site residue.

Belongs to the thioester dehydratase family. FabZ subfamily.

The protein resides in the cytoplasm. The catalysed reaction is a (3R)-hydroxyacyl-[ACP] = a (2E)-enoyl-[ACP] + H2O. Involved in unsaturated fatty acids biosynthesis. Catalyzes the dehydration of short chain beta-hydroxyacyl-ACPs and long chain saturated and unsaturated beta-hydroxyacyl-ACPs. The sequence is that of 3-hydroxyacyl-[acyl-carrier-protein] dehydratase FabZ from Allorhizobium ampelinum (strain ATCC BAA-846 / DSM 112012 / S4) (Agrobacterium vitis (strain S4)).